The primary structure comprises 594 residues: MNFIDVAKIYEKIEATTGRLEMIDYLKNLFLSTPPEILDKIVYLTLGNIAASFEGIELGVGEKLFLRALSLATGIPQERLEEEYPKLGDIGKLAEWAVSKKAAQSFFTEDLTVERVFDTLSKVARATGEGAQDLKVRLIAGILSDAKPLEARYIARIVTEKLRLGVRDMTVLDALSEAFLKGRAYRDKLERKYNIYPDIGKIAKVVAEKGIKGLDEITITLGIPVRPMLAQRLRSAEEIMEKIGPRIFAEFKYDGERMQIHVWKDGKVKIFSRRLEDITEPYPDVREYVSKAVEGHEVVLDCETVAINPDTGEILPFQELMHRRRKYGVEEAMKTYPTVTYAFDLLYLDGRELLDEQLDDRRKILKEILKENEKARLVQYEEIDGNVEELERFFEHAVEMGTEGLVVKDPKSIYQAGVRGWSWIKLKRSYISKMIEPVDLVVVGAFWGKGKRAGTYGALLMAAYSPEEDVFKTVCKMGSGFTDEELARMPKLLEDYKIDHKHPSVISNIEADVYFVPVKVAQVLGDEITLSPTHTCGWNKVRKNAGLAIRFPRFMGWRDDKGPQDATTEEEIIEMYKEQLKVVEVEETKSEEEA.

E250 is an ATP binding site. K252 acts as the N6-AMP-lysine intermediate in catalysis. R257, R273, E303, F343, R419, and K425 together coordinate ATP.

Belongs to the ATP-dependent DNA ligase family. Mg(2+) serves as cofactor.

It carries out the reaction ATP + (deoxyribonucleotide)n-3'-hydroxyl + 5'-phospho-(deoxyribonucleotide)m = (deoxyribonucleotide)n+m + AMP + diphosphate.. In terms of biological role, DNA ligase that seals nicks in double-stranded DNA during DNA replication, DNA recombination and DNA repair. The sequence is that of DNA ligase 2 from Korarchaeum cryptofilum (strain OPF8).